The following is a 341-amino-acid chain: Glycerol-3-phosphate dehydrogenase [NAD(P)+] (341 aa).

Positions 17, 18, 37, and 112 each coordinate NADPH. The sn-glycerol 3-phosphate site is built by lysine 112 and glycine 140. Position 144 (alanine 144) interacts with NADPH. 5 residues coordinate sn-glycerol 3-phosphate: lysine 195, aspartate 248, serine 258, arginine 259, and asparagine 260. The active-site Proton acceptor is the lysine 195. Arginine 259 contacts NADPH. NADPH contacts are provided by valine 283 and glutamate 285.

The protein belongs to the NAD-dependent glycerol-3-phosphate dehydrogenase family.

The protein localises to the cytoplasm. It carries out the reaction sn-glycerol 3-phosphate + NAD(+) = dihydroxyacetone phosphate + NADH + H(+). It catalyses the reaction sn-glycerol 3-phosphate + NADP(+) = dihydroxyacetone phosphate + NADPH + H(+). It participates in membrane lipid metabolism; glycerophospholipid metabolism. Functionally, catalyzes the reduction of the glycolytic intermediate dihydroxyacetone phosphate (DHAP) to sn-glycerol 3-phosphate (G3P), the key precursor for phospholipid synthesis. The polypeptide is Glycerol-3-phosphate dehydrogenase [NAD(P)+] (Mycobacterium avium (strain 104)).